A 316-amino-acid chain; its full sequence is Ribosomal RNA small subunit methyltransferase H (316 aa).

S-adenosyl-L-methionine is bound by residues 35–37 (GGH), aspartate 55, phenylalanine 79, aspartate 101, and glutamine 108.

This sequence belongs to the methyltransferase superfamily. RsmH family.

It is found in the cytoplasm. The enzyme catalyses cytidine(1402) in 16S rRNA + S-adenosyl-L-methionine = N(4)-methylcytidine(1402) in 16S rRNA + S-adenosyl-L-homocysteine + H(+). Specifically methylates the N4 position of cytidine in position 1402 (C1402) of 16S rRNA. This Aliivibrio fischeri (strain MJ11) (Vibrio fischeri) protein is Ribosomal RNA small subunit methyltransferase H.